Here is a 466-residue protein sequence, read N- to C-terminus: Amino acid permease 4 (466 aa).

At M1–T22 the chain is on the cytoplasmic side. 2 consecutive transmembrane segments (helical) span residues V23–A43 and W44–V64. Over T65–Y111 the chain is Cytoplasmic. The chain crosses the membrane as a helical span at residues L112 to I132. Topologically, residues K133–L177 are extracellular. A helical transmembrane segment spans residues S178 to I198. Over Q199–R226 the chain is Cytoplasmic. A helical transmembrane segment spans residues T227–I247. Residues Q248–R266 lie on the Extracellular side of the membrane. A helical membrane pass occupies residues I267 to F287. Topologically, residues G288–K290 are cytoplasmic. The chain crosses the membrane as a helical span at residues A291 to A311. Topologically, residues N312–A313 are extracellular. The helical transmembrane segment at A314–I334 threads the bilayer. Residues E335–R369 are Cytoplasmic-facing. A helical transmembrane segment spans residues A370 to F390. Topologically, residues N391 to D392 are extracellular. The helical transmembrane segment at V393 to M413 threads the bilayer. At Y414–C435 the chain is on the cytoplasmic side. A helical transmembrane segment spans residues G436–L456. The Extracellular segment spans residues K457 to Y466.

The protein belongs to the amino acid/polyamine transporter 2 family. Amino acid/auxin permease (AAAP) (TC 2.A.18.2) subfamily. Expressed in leaves, stems and flowers.

It is found in the cell membrane. Its activity is regulated as follows. Inhibited by 2,4-dinitrophenol. Amino acid-proton symporter. Stereospecific transporter with a broad specificity for neutral amino acids, favoring small amino acids such as alanine, asparagine and glutamine. Also accepts large aromatic residues such as in phenlalanine or tyrosine. In Arabidopsis thaliana (Mouse-ear cress), this protein is Amino acid permease 4 (AAP4).